We begin with the raw amino-acid sequence, 214 residues long: Large ribosomal subunit protein uL3 (214 aa).

Gln-153 carries the N5-methylglutamine modification.

This sequence belongs to the universal ribosomal protein uL3 family. In terms of assembly, part of the 50S ribosomal subunit. Forms a cluster with proteins L14 and L19. Post-translationally, methylated by PrmB.

Its function is as follows. One of the primary rRNA binding proteins, it binds directly near the 3'-end of the 23S rRNA, where it nucleates assembly of the 50S subunit. In Aromatoleum aromaticum (strain DSM 19018 / LMG 30748 / EbN1) (Azoarcus sp. (strain EbN1)), this protein is Large ribosomal subunit protein uL3.